A 166-amino-acid polypeptide reads, in one-letter code: Deglycase PfpI (166 aa).

In terms of domain architecture, PfpI endopeptidase spans 1 to 166 (MKILFLSANE…WMREFVKLLK (166 aa)). Catalysis depends on cysteine 100, which acts as the Nucleophile. Histidine 101 is a catalytic residue.

This sequence belongs to the peptidase C56 family. Homooligomer. Exists in two functional species: the predominant form is a homohexamer that comprises about 90% of the total activity, and the minor form is trimeric.

Its subcellular location is the cytoplasm. It carries out the reaction N(omega)-(1-hydroxy-2-oxopropyl)-L-arginyl-[protein] + H2O = lactate + L-arginyl-[protein] + H(+). It catalyses the reaction N(6)-(1-hydroxy-2-oxopropyl)-L-lysyl-[protein] + H2O = lactate + L-lysyl-[protein] + H(+). The catalysed reaction is S-(1-hydroxy-2-oxopropyl)-L-cysteinyl-[protein] + H2O = lactate + L-cysteinyl-[protein] + H(+). The enzyme catalyses N(omega)-(1-hydroxy-2-oxoethyl)-L-arginyl-[protein] + H2O = L-arginyl-[protein] + glycolate + H(+). It carries out the reaction N(6)-(1-hydroxy-2-oxoethyl)-L-lysyl-[protein] + H2O = glycolate + L-lysyl-[protein] + H(+). It catalyses the reaction S-(1-hydroxy-2-oxoethyl)-L-cysteinyl-[protein] + H2O = glycolate + L-cysteinyl-[protein] + H(+). Its function is as follows. Deglycase that catalyzes the deglycation of the Maillard adducts formed between amino groups of proteins and reactive carbonyl groups of glyoxals. Thus, functions as a protein deglycase that repairs methylglyoxal- and glyoxal-glycated proteins, and releases repaired proteins and lactate or glycolate, respectively. Deglycates cysteine, arginine and lysine residues in proteins, and thus reactivates these proteins by reversing glycation by glyoxals. Thus, was shown to afford full protection against glycation of thioredoxin by glyoxal. Acts on early glycation intermediates (hemithioacetals and aminocarbinols), preventing the formation of advanced glycation endproducts (AGE) that cause irreversible damage. Prevents acrylamide formation in asparagine/glyoxal and asparagine/sugar mixtures, likely by degrading asparagine/glyoxal Maillard adducts formed at high temperatures. Also displays proteolytic activity. Cleaves at the carboxyl side of both basic and hydrophobic residues in the P1 position, indicating trypsin- and chymotrypsin-like specificities. The polypeptide is Deglycase PfpI (Pyrococcus furiosus (strain ATCC 43587 / DSM 3638 / JCM 8422 / Vc1)).